We begin with the raw amino-acid sequence, 436 residues long: D-amino acid dehydrogenase (436 aa).

An FAD-binding site is contributed by 3-17 (IVVLGAGVVGVTSAY).

Belongs to the DadA oxidoreductase family. It depends on FAD as a cofactor.

It carries out the reaction a D-alpha-amino acid + A + H2O = a 2-oxocarboxylate + AH2 + NH4(+). The protein operates within amino-acid degradation; D-alanine degradation; NH(3) and pyruvate from D-alanine: step 1/1. Functionally, oxidative deamination of D-amino acids. The sequence is that of D-amino acid dehydrogenase from Cereibacter sphaeroides (strain ATCC 17029 / ATH 2.4.9) (Rhodobacter sphaeroides).